Reading from the N-terminus, the 216-residue chain is MFFKMLKEDVDVVFDQDPAARSYIEVILTYSGLHAIWAHRIAHALYKRKRFFIARAISQIARFFTGIEIHPGAKIGRRFFIDHGMGVVIGETCEIGNNVTVFQGVTLGGTGKEKGKRHPTIEDDALISTGAKVLGSITVGRGAKIGAGSVVLHDVPECSTVVGIPGRVVVQNGKKIRRDLNHQDLPDPVADRFRELENEIRQLKQELRRKEREDEL.

It belongs to the transferase hexapeptide repeat family.

Its subcellular location is the cytoplasm. It carries out the reaction L-serine + acetyl-CoA = O-acetyl-L-serine + CoA. Its pathway is amino-acid biosynthesis; L-cysteine biosynthesis; L-cysteine from L-serine: step 1/2. With respect to regulation, inhibited by cysteine. Functionally, catalyzes the acetylation of serine by acetyl-CoA to produce O-acetylserine (OAS). This Bacillus licheniformis (strain ATCC 14580 / DSM 13 / JCM 2505 / CCUG 7422 / NBRC 12200 / NCIMB 9375 / NCTC 10341 / NRRL NRS-1264 / Gibson 46) protein is Serine acetyltransferase.